A 447-amino-acid polypeptide reads, in one-letter code: NADP-specific glutamate dehydrogenase (447 aa).

Positions 92, 113, and 116 each coordinate substrate. The active-site Proton donor is Lys-128. Substrate is bound at residue Gly-167. Thr-212 and Asn-243 together coordinate NADP(+). A substrate-binding site is contributed by Ser-379.

This sequence belongs to the Glu/Leu/Phe/Val dehydrogenases family. Homohexamer.

The enzyme catalyses L-glutamate + NADP(+) + H2O = 2-oxoglutarate + NH4(+) + NADPH + H(+). Its function is as follows. Catalyzes the reversible oxidative deamination of glutamate to alpha-ketoglutarate and ammonia. The sequence is that of NADP-specific glutamate dehydrogenase (gdh) from Corynebacterium efficiens (strain DSM 44549 / YS-314 / AJ 12310 / JCM 11189 / NBRC 100395).